We begin with the raw amino-acid sequence, 123 residues long: Small ribosomal subunit protein uS12 (123 aa).

Aspartate 89 carries the 3-methylthioaspartic acid modification.

It belongs to the universal ribosomal protein uS12 family. As to quaternary structure, part of the 30S ribosomal subunit. Contacts proteins S8 and S17. May interact with IF1 in the 30S initiation complex.

Functionally, with S4 and S5 plays an important role in translational accuracy. Interacts with and stabilizes bases of the 16S rRNA that are involved in tRNA selection in the A site and with the mRNA backbone. Located at the interface of the 30S and 50S subunits, it traverses the body of the 30S subunit contacting proteins on the other side and probably holding the rRNA structure together. The combined cluster of proteins S8, S12 and S17 appears to hold together the shoulder and platform of the 30S subunit. This Chelativorans sp. (strain BNC1) protein is Small ribosomal subunit protein uS12.